Consider the following 485-residue polypeptide: Glycogen synthase (485 aa).

K17 is an ADP-alpha-D-glucose binding site.

Belongs to the glycosyltransferase 1 family. Bacterial/plant glycogen synthase subfamily.

The enzyme catalyses [(1-&gt;4)-alpha-D-glucosyl](n) + ADP-alpha-D-glucose = [(1-&gt;4)-alpha-D-glucosyl](n+1) + ADP + H(+). It functions in the pathway glycan biosynthesis; glycogen biosynthesis. In terms of biological role, synthesizes alpha-1,4-glucan chains using ADP-glucose. In Novosphingobium aromaticivorans (strain ATCC 700278 / DSM 12444 / CCUG 56034 / CIP 105152 / NBRC 16084 / F199), this protein is Glycogen synthase.